We begin with the raw amino-acid sequence, 1245 residues long: Pesticidal crystal protein Cry5Ba (1245 aa).

The interval 1219-1245 is disordered; sequence PLPTDDQSSDGNTTSNTNSNTSMNNNQ. Low complexity predominate over residues 1222–1245; the sequence is TDDQSSDGNTTSNTNSNTSMNNNQ.

The protein belongs to the delta endotoxin family.

Promotes colloidosmotic lysis by binding to the midgut epithelial cells of hymenopteran species. In Bacillus thuringiensis, this protein is Pesticidal crystal protein Cry5Ba (cry5Ba).